The following is a 160-amino-acid chain: MD-2-related lipid-recognition protein ROSY1 (160 aa).

The N-terminal stretch at 1 to 23 is a signal peptide; it reads MAISHTQLLLLLLVSLFFSPALC.

Interacts with SYT1. In terms of tissue distribution, expressed exclusively in roots, in epidermis and cortex cells of the root elongation zone, and lateral root cap cells at the root tip.

Its subcellular location is the cytoplasm. Functionally, involved in the regulation of gravitropic response and basipetal auxin transport in roots. Involved in salt stress tolerance. May facilitate membrane trafficking and asymmetric cell elongation via SYT1. Binds stigmasterol and dipalmitoyl phosphoethanolamine (DPPE) in vitro. The chain is MD-2-related lipid-recognition protein ROSY1 from Arabidopsis thaliana (Mouse-ear cress).